Reading from the N-terminus, the 271-residue chain is MQQHIIESTHVKPTINPKEEIRQRIDFLKAYVKRAGAKGLVLGISGGQDSSLAGKLCQLAMEELREETGDEYTFYAIRLPYGEQHDEHDAQLALEFIRPDKSFTVNIKPAVDASVEAFHRATGLELSDFHKGNTKARERMKAQYDIAATFGALVVGTDHAAEYVTGFYTKHGDGACDLTPLTGLNKRQGKALLHELEAHERVIYKVPTADLEDGRPGLPDEVALGMTYDQLDDYLEGKTIDPTIAERIETIFKRSRHKHHMPASLYDEWWQ.

43-50 (GISGGQDS) provides a ligand contact to ATP. Position 49 (Asp-49) interacts with Mg(2+). Arg-137 serves as a coordination point for deamido-NAD(+). Thr-157 contacts ATP. Residue Glu-162 participates in Mg(2+) binding. Deamido-NAD(+) is bound by residues Lys-170 and Asp-177. ATP-binding residues include Lys-186 and Thr-208. 257–258 (HK) contacts deamido-NAD(+).

The protein belongs to the NAD synthetase family. In terms of assembly, homodimer.

The enzyme catalyses deamido-NAD(+) + NH4(+) + ATP = AMP + diphosphate + NAD(+) + H(+). It functions in the pathway cofactor biosynthesis; NAD(+) biosynthesis; NAD(+) from deamido-NAD(+) (ammonia route): step 1/1. Functionally, catalyzes the ATP-dependent amidation of deamido-NAD to form NAD. Uses ammonia as a nitrogen source. This Exiguobacterium sp. (strain ATCC BAA-1283 / AT1b) protein is NH(3)-dependent NAD(+) synthetase.